Reading from the N-terminus, the 914-residue chain is Dynamin-2A (914 aa).

M1 carries the N-acetylmethionine modification. Positions 35 to 303 (PATFLNVVAL…IRSRMKLRLP (269 aa)) constitute a Dynamin-type G domain. The segment at 45–52 (GNVGAGKS) is G1 motif. 45 to 52 (GNVGAGKS) is a GTP binding site. The tract at residues 71 to 73 (ATR) is G2 motif. A G3 motif region spans residues 143 to 146 (DLPG). Residues 143-147 (DLPGL) and 204-207 (GKID) each bind GTP. Residues 204 to 207 (GKID) form a G4 motif region. The segment at 238–241 (AVIG) is G5 motif. Over residues 507-522 (RREEELKGRSSKKGQD) the composition is skewed to basic and acidic residues. Disordered stretches follow at residues 507 to 570 (RREE…TAGP) and 629 to 648 (PEDEVEKSKSSKDKKANGPD). Polar residues predominate over residues 523-535 (AEQSLLSRATSPQ). Basic and acidic residues-rich tracts occupy residues 547-560 (SMKDKPSPQDKETP) and 634-645 (EKSKSSKDKKAN). The 125-residue stretch at 572-696 (GEITAGYLMK…WINKLQKVIQ (125 aa)) folds into the PH domain. Residues 730–823 (LRWMSQEVRG…QLSIHDNRAA (94 aa)) form the GED domain. Positions 781-805 (NERIESLIQEDQNVKRRRERYQKQS) form a coiled coil. The interval 821–914 (RAAAASSYSD…PPPTGSAYRY (94 aa)) is disordered. Composition is skewed to polar residues over residues 826 to 839 (SSYSDNSGTESSPR) and 852 to 866 (AFNSAANGPSDSLSK).

Belongs to the TRAFAC class dynamin-like GTPase superfamily. Dynamin/Fzo/YdjA family. Binds PtdIns3P. Interacts with SH3P3 (via SH3 domain) and (via C-terminus) with GAMMA-ADR. May homooligomerize or heterooligomerize.

It localises to the cytoplasm. The protein resides in the cytosol. Its subcellular location is the golgi apparatus membrane. The protein localises to the cytoskeleton. It is found in the phragmoplast. It localises to the cytoplasmic vesicle. The protein resides in the clathrin-coated vesicle. It catalyses the reaction GTP + H2O = GDP + phosphate + H(+). With respect to regulation, increased GTPase activity in the presence of phosphatidic acid. Functionally, microtubule-associated force-producing protein involved in clathrin-mediated vesicle trafficking from the trans-Golgi network to the central vacuole. Able to bind and hydrolyze GTP. Binds specifically to phosphatidylinositol 3-phosphate (PtdIns3P). In Arabidopsis thaliana (Mouse-ear cress), this protein is Dynamin-2A (DRP2A).